Here is a 334-residue protein sequence, read N- to C-terminus: Beta-ketoacyl-[acyl-carrier-protein] synthase III (334 aa).

Residues cysteine 116 and histidine 256 contribute to the active site. The segment at 257 to 261 (QANLR) is ACP-binding. Asparagine 286 is a catalytic residue.

The protein belongs to the thiolase-like superfamily. FabH family. Homodimer.

It localises to the cytoplasm. It carries out the reaction malonyl-[ACP] + acetyl-CoA + H(+) = 3-oxobutanoyl-[ACP] + CO2 + CoA. It functions in the pathway lipid metabolism; fatty acid biosynthesis. In terms of biological role, catalyzes the condensation reaction of fatty acid synthesis by the addition to an acyl acceptor of two carbons from malonyl-ACP. Catalyzes the first condensation reaction which initiates fatty acid synthesis and may therefore play a role in governing the total rate of fatty acid production. Possesses both acetoacetyl-ACP synthase and acetyl transacylase activities. Its substrate specificity determines the biosynthesis of branched-chain and/or straight-chain of fatty acids. This Phocaeicola vulgatus (strain ATCC 8482 / DSM 1447 / JCM 5826 / CCUG 4940 / NBRC 14291 / NCTC 11154) (Bacteroides vulgatus) protein is Beta-ketoacyl-[acyl-carrier-protein] synthase III.